Reading from the N-terminus, the 219-residue chain is uncharacterized protein (219 aa).

Residues 57–158 (QLEHMTRAAM…LSEASRQTLL (102 aa)) enclose the HD domain.

This is an uncharacterized protein from Acanthamoeba polyphaga mimivirus (APMV).